The sequence spans 354 residues: tRNA N6-adenosine threonylcarbamoyltransferase (354 aa).

2 residues coordinate Fe cation: His111 and His115. Residues 134 to 138 (LVSGG), Asp167, Gly180, and Asn279 contribute to the substrate site. Asp319 contacts Fe cation.

This sequence belongs to the KAE1 / TsaD family. The cofactor is Fe(2+).

Its subcellular location is the cytoplasm. The enzyme catalyses L-threonylcarbamoyladenylate + adenosine(37) in tRNA = N(6)-L-threonylcarbamoyladenosine(37) in tRNA + AMP + H(+). Required for the formation of a threonylcarbamoyl group on adenosine at position 37 (t(6)A37) in tRNAs that read codons beginning with adenine. Is involved in the transfer of the threonylcarbamoyl moiety of threonylcarbamoyl-AMP (TC-AMP) to the N6 group of A37, together with TsaE and TsaB. TsaD likely plays a direct catalytic role in this reaction. This is tRNA N6-adenosine threonylcarbamoyltransferase from Neisseria gonorrhoeae (strain ATCC 700825 / FA 1090).